The following is a 468-amino-acid chain: 3-isopropylmalate dehydratase large subunit (468 aa).

3 residues coordinate [4Fe-4S] cluster: C349, C409, and C412.

The protein belongs to the aconitase/IPM isomerase family. LeuC type 1 subfamily. As to quaternary structure, heterodimer of LeuC and LeuD. The cofactor is [4Fe-4S] cluster.

The catalysed reaction is (2R,3S)-3-isopropylmalate = (2S)-2-isopropylmalate. It participates in amino-acid biosynthesis; L-leucine biosynthesis; L-leucine from 3-methyl-2-oxobutanoate: step 2/4. Its function is as follows. Catalyzes the isomerization between 2-isopropylmalate and 3-isopropylmalate, via the formation of 2-isopropylmaleate. The polypeptide is 3-isopropylmalate dehydratase large subunit (Jannaschia sp. (strain CCS1)).